Here is a 207-residue protein sequence, read N- to C-terminus: Uracil phosphoribosyltransferase (207 aa).

5-phospho-alpha-D-ribose 1-diphosphate contacts are provided by residues Arg-77, Arg-102, and 129–137 (DPMVATGGS). Uracil is bound by residues Ile-192 and 197–199 (GDA). Asp-198 serves as a coordination point for 5-phospho-alpha-D-ribose 1-diphosphate.

Belongs to the UPRTase family. Mg(2+) is required as a cofactor.

It catalyses the reaction UMP + diphosphate = 5-phospho-alpha-D-ribose 1-diphosphate + uracil. The protein operates within pyrimidine metabolism; UMP biosynthesis via salvage pathway; UMP from uracil: step 1/1. Its activity is regulated as follows. Allosterically activated by GTP. Its function is as follows. Catalyzes the conversion of uracil and 5-phospho-alpha-D-ribose 1-diphosphate (PRPP) to UMP and diphosphate. The protein is Uracil phosphoribosyltransferase of Mycobacterium bovis (strain ATCC BAA-935 / AF2122/97).